The following is a 660-amino-acid chain: Glycogen debranching enzyme (660 aa).

The active-site Nucleophile is D338. The active-site Proton donor is the E373. The span at 460 to 472 (NEANGEDNRDGAW) shows a compositional bias: basic and acidic residues. A disordered region spans residues 460 to 482 (NEANGEDNRDGAWENHSNNHGYE).

Belongs to the glycosyl hydrolase 13 family.

It catalyses the reaction Hydrolysis of (1-&gt;6)-alpha-D-glucosidic linkages to branches with degrees of polymerization of three or four glucose residues in limit dextrin.. The protein operates within glycan degradation; glycogen degradation. Its function is as follows. Removes maltotriose and maltotetraose chains that are attached by 1,6-alpha-linkage to the limit dextrin main chain, generating a debranched limit dextrin. The chain is Glycogen debranching enzyme from Cronobacter sakazakii (strain ATCC BAA-894) (Enterobacter sakazakii).